The following is a 1028-amino-acid chain: Kinesin-like protein KIF28 (1028 aa).

The region spanning 11–358 is the Kinesin motor domain; that stretch reads SVRVAVRVRP…LRYAERAKKV (348 aa). 114–121 serves as a coordination point for ATP; the sequence is GQTGSGKS. The FHA domain occupies 460–523; it reads CDVGRAASNA…LQHLDRIILG (64 aa). Residues 873-902 are a coiled coil; that stretch reads NQVPELYQKLLKLEQETELLRDVNRALRGE.

The protein belongs to the TRAFAC class myosin-kinesin ATPase superfamily. Kinesin family.

The protein resides in the mitochondrion membrane. Its function is as follows. Microtubule-dependent motor protein required for mitochondrion morphology and transport of mitochondria in neuronal cells. This Mus musculus (Mouse) protein is Kinesin-like protein KIF28.